Here is a 255-residue protein sequence, read N- to C-terminus: Imidazole glycerol phosphate synthase subunit HisF (255 aa).

Residues Asp-11 and Asp-130 contribute to the active site.

This sequence belongs to the HisA/HisF family. As to quaternary structure, heterodimer of HisH and HisF.

It is found in the cytoplasm. It catalyses the reaction 5-[(5-phospho-1-deoxy-D-ribulos-1-ylimino)methylamino]-1-(5-phospho-beta-D-ribosyl)imidazole-4-carboxamide + L-glutamine = D-erythro-1-(imidazol-4-yl)glycerol 3-phosphate + 5-amino-1-(5-phospho-beta-D-ribosyl)imidazole-4-carboxamide + L-glutamate + H(+). The protein operates within amino-acid biosynthesis; L-histidine biosynthesis; L-histidine from 5-phospho-alpha-D-ribose 1-diphosphate: step 5/9. In terms of biological role, IGPS catalyzes the conversion of PRFAR and glutamine to IGP, AICAR and glutamate. The HisF subunit catalyzes the cyclization activity that produces IGP and AICAR from PRFAR using the ammonia provided by the HisH subunit. The polypeptide is Imidazole glycerol phosphate synthase subunit HisF (Campylobacter jejuni (strain RM1221)).